We begin with the raw amino-acid sequence, 430 residues long: Histidinol dehydrogenase (430 aa).

Residues Tyr-130, Gln-191, and Asn-214 each coordinate NAD(+). Substrate contacts are provided by Ser-237, Gln-259, and His-262. 2 residues coordinate Zn(2+): Gln-259 and His-262. Catalysis depends on proton acceptor residues Glu-327 and His-328. Residues His-328, Asp-361, Glu-415, and His-420 each coordinate substrate. Residue Asp-361 coordinates Zn(2+). A Zn(2+)-binding site is contributed by His-420.

Belongs to the histidinol dehydrogenase family. Zn(2+) serves as cofactor.

It catalyses the reaction L-histidinol + 2 NAD(+) + H2O = L-histidine + 2 NADH + 3 H(+). It functions in the pathway amino-acid biosynthesis; L-histidine biosynthesis; L-histidine from 5-phospho-alpha-D-ribose 1-diphosphate: step 9/9. Functionally, catalyzes the sequential NAD-dependent oxidations of L-histidinol to L-histidinaldehyde and then to L-histidine. The polypeptide is Histidinol dehydrogenase (Brucella melitensis biotype 1 (strain ATCC 23456 / CCUG 17765 / NCTC 10094 / 16M)).